The chain runs to 84 residues: Putative antitoxin VapB7 (84 aa).

Antitoxin component of a possible type II toxin-antitoxin (TA) system. The cognate toxin is VapC7. The chain is Putative antitoxin VapB7 (vapB7) from Mycobacterium tuberculosis (strain ATCC 25618 / H37Rv).